Reading from the N-terminus, the 188-residue chain is PRA1 family protein 3 (188 aa).

The residue at position 1 (M1) is an N-acetylmethionine. Over M1–R35 the chain is Cytoplasmic. Helical transmembrane passes span V36 to S56 and I57 to F77. At T78–M93 the chain is on the cytoplasmic side. Transmembrane regions (helical) follow at residues K94 to S114 and M115 to I135. Positions M103–G117 are required for homodimer formation and heterodimer formation with ARL6IP1. Topologically, residues H136–E188 are cytoplasmic. A targeting to endoplasmic reticulum membrane region spans residues H136 to E188.

The protein belongs to the PRA1 family. In terms of assembly, homodimer. Heterodimer with ARL6IP1. Forms multimers. Interacts with ARL6. Interacts with prenylated RAB1A and RAB3A. Interacts with SLC1A1/EAAC1. Interacts with RTN2 (via first transmembrane domain). Does not interact with VAMP1, VAMP2 or VAMP3.

The protein resides in the endoplasmic reticulum membrane. The protein localises to the cell membrane. Its subcellular location is the cytoplasm. It localises to the cytoskeleton. In terms of biological role, regulates intracellular concentrations of taurine and glutamate. Negatively modulates SLC1A1/EAAC1 glutamate transport activity by decreasing its affinity for glutamate in a PKC activity-dependent manner. Plays a role in the retention of SLC1A1/EAAC1 in the endoplasmic reticulum. The sequence is that of PRA1 family protein 3 (ARL6IP5) from Homo sapiens (Human).